The sequence spans 475 residues: Ribulose bisphosphate carboxylase large chain (475 aa).

Substrate-binding residues include Asn-123 and Thr-173. Lys-175 serves as the catalytic Proton acceptor. Lys-177 contributes to the substrate binding site. Mg(2+) is bound by residues Lys-201, Asp-203, and Glu-204. The residue at position 201 (Lys-201) is an N6-carboxylysine. The active-site Proton acceptor is His-294. Arg-295, His-327, and Ser-379 together coordinate substrate.

The protein belongs to the RuBisCO large chain family. Type I subfamily. Heterohexadecamer of 8 large chains and 8 small chains; disulfide-linked. The disulfide link is formed within the large subunit homodimers. Interacts with assembly factor Raf1 which helps form the holoenzyme, most interaction (and folding) occurs in the cytoplasm. The cofactor is Mg(2+). Post-translationally, the disulfide bond which can form in the large chain dimeric partners within the hexadecamer appears to be associated with oxidative stress and protein turnover.

The protein localises to the carboxysome. Its subcellular location is the cytoplasm. The catalysed reaction is 2 (2R)-3-phosphoglycerate + 2 H(+) = D-ribulose 1,5-bisphosphate + CO2 + H2O. The enzyme catalyses D-ribulose 1,5-bisphosphate + O2 = 2-phosphoglycolate + (2R)-3-phosphoglycerate + 2 H(+). In terms of biological role, ruBisCO catalyzes two reactions: the carboxylation of D-ribulose 1,5-bisphosphate, the primary event in carbon dioxide fixation, as well as the oxidative fragmentation of the pentose substrate in the photorespiration process. Both reactions occur simultaneously and in competition at the same active site. The protein is Ribulose bisphosphate carboxylase large chain of Thermosynechococcus vestitus (strain NIES-2133 / IAM M-273 / BP-1).